The primary structure comprises 122 residues: MSLKIRLARGGAKKRPYYRIVIADARSPRDGRFIEKIGTFNPLLAKDAENRVVLDADKAKAWLEKGAQPTDRVARFLDAAGLMKRDAKNNPKKGEPGEKAKERAKERAEKAAAGSTEDAAAE.

Residues 81–122 (GLMKRDAKNNPKKGEPGEKAKERAKERAEKAAAGSTEDAAAE) are disordered. Positions 83–110 (MKRDAKNNPKKGEPGEKAKERAKERAEK) are enriched in basic and acidic residues. Over residues 111 to 122 (AAAGSTEDAAAE) the composition is skewed to low complexity.

This sequence belongs to the bacterial ribosomal protein bS16 family.

This chain is Small ribosomal subunit protein bS16, found in Xanthobacter autotrophicus (strain ATCC BAA-1158 / Py2).